We begin with the raw amino-acid sequence, 258 residues long: UPF0246 protein CJA_0191 (258 aa).

Belongs to the UPF0246 family.

The chain is UPF0246 protein CJA_0191 from Cellvibrio japonicus (strain Ueda107) (Pseudomonas fluorescens subsp. cellulosa).